Consider the following 219-residue polypeptide: Uracil-DNA glycosylase (219 aa).

D62 functions as the Proton acceptor in the catalytic mechanism.

The protein belongs to the uracil-DNA glycosylase (UDG) superfamily. UNG family.

The protein localises to the cytoplasm. It carries out the reaction Hydrolyzes single-stranded DNA or mismatched double-stranded DNA and polynucleotides, releasing free uracil.. Excises uracil residues from the DNA which can arise as a result of misincorporation of dUMP residues by DNA polymerase or due to deamination of cytosine. The chain is Uracil-DNA glycosylase from Lactococcus lactis subsp. cremoris (strain MG1363).